The sequence spans 437 residues: GTPase Der (437 aa).

EngA-type G domains follow at residues 4-167 (PIVA…PDNA) and 175-352 (IHFS…QHHR). GTP is bound by residues 10-17 (GRPNVGKS), 57-61 (DTGGI), 119-122 (NKVD), 181-188 (GRPNVGKS), 229-233 (DTAGI), and 294-297 (NKWD). Positions 353–437 (QRIQSAVLND…PIHLIKRQRQ (85 aa)) constitute a KH-like domain.

Belongs to the TRAFAC class TrmE-Era-EngA-EngB-Septin-like GTPase superfamily. EngA (Der) GTPase family. Associates with the 50S ribosomal subunit.

In terms of biological role, GTPase that plays an essential role in the late steps of ribosome biogenesis. In Limosilactobacillus reuteri (strain DSM 20016) (Lactobacillus reuteri), this protein is GTPase Der.